A 267-amino-acid chain; its full sequence is Undecaprenyl-diphosphatase (267 aa).

7 helical membrane passes run 39-59, 87-107, 111-131, 149-169, 189-209, 218-238, and 244-264; these read QGLA…ILYF, WMIA…KDFI, LRSA…LWWV, ALFI…RSGA, FLMS…KLVT, ALSI…HAFL, and VGMM…IAFL.

This sequence belongs to the UppP family.

It localises to the cell inner membrane. The catalysed reaction is di-trans,octa-cis-undecaprenyl diphosphate + H2O = di-trans,octa-cis-undecaprenyl phosphate + phosphate + H(+). Its function is as follows. Catalyzes the dephosphorylation of undecaprenyl diphosphate (UPP). Confers resistance to bacitracin. This Photobacterium profundum (strain SS9) protein is Undecaprenyl-diphosphatase.